We begin with the raw amino-acid sequence, 151 residues long: UPF0208 membrane protein KPN78578_26420 (151 aa).

Transmembrane regions (helical) follow at residues 46-65 (YAIR…QIAL) and 69-91 (LGPA…WWLG).

The protein belongs to the UPF0208 family.

It localises to the cell inner membrane. This is UPF0208 membrane protein KPN78578_26420 from Klebsiella pneumoniae subsp. pneumoniae (strain ATCC 700721 / MGH 78578).